The sequence spans 663 residues: uncharacterized protein (663 aa).

An N-terminal signal peptide occupies residues 1-29; that stretch reads MLDIGVIGRLKFATAFMAMSLLLVPAAEA.

This sequence belongs to the bacterial solute-binding protein 5 family.

Its subcellular location is the periplasm. Functionally, possible binding-protein with either a transport or enzymatic activity. This is an uncharacterized protein from Sinorhizobium fredii (strain NBRC 101917 / NGR234).